We begin with the raw amino-acid sequence, 172 residues long: Small ribosomal subunit protein uS5 (172 aa).

The S5 DRBM domain maps to 17-80 (MREKMIAVNR…EEARRKMIKV (64 aa)).

This sequence belongs to the universal ribosomal protein uS5 family. In terms of assembly, part of the 30S ribosomal subunit. Contacts proteins S4 and S8.

Functionally, with S4 and S12 plays an important role in translational accuracy. Located at the back of the 30S subunit body where it stabilizes the conformation of the head with respect to the body. This chain is Small ribosomal subunit protein uS5, found in Herminiimonas arsenicoxydans.